The primary structure comprises 56 residues: Large ribosomal subunit protein bL33 (56 aa).

It belongs to the bacterial ribosomal protein bL33 family.

The polypeptide is Large ribosomal subunit protein bL33 (Delftia acidovorans (strain DSM 14801 / SPH-1)).